The chain runs to 221 residues: Iron-sulfur cluster repair protein YtfE (221 aa).

The protein belongs to the RIC family. YtfE subfamily. Homodimer.

It is found in the cytoplasm. Functionally, di-iron-containing protein involved in the repair of iron-sulfur clusters damaged by oxidative and nitrosative stress conditions. The polypeptide is Iron-sulfur cluster repair protein YtfE (Cronobacter sakazakii (strain ATCC BAA-894) (Enterobacter sakazakii)).